The following is a 266-amino-acid chain: Tryptophan synthase alpha chain (266 aa).

Catalysis depends on proton acceptor residues E51 and D62.

The protein belongs to the TrpA family. As to quaternary structure, tetramer of two alpha and two beta chains.

The enzyme catalyses (1S,2R)-1-C-(indol-3-yl)glycerol 3-phosphate + L-serine = D-glyceraldehyde 3-phosphate + L-tryptophan + H2O. Its pathway is amino-acid biosynthesis; L-tryptophan biosynthesis; L-tryptophan from chorismate: step 5/5. In terms of biological role, the alpha subunit is responsible for the aldol cleavage of indoleglycerol phosphate to indole and glyceraldehyde 3-phosphate. The protein is Tryptophan synthase alpha chain of Prochlorococcus marinus (strain NATL1A).